We begin with the raw amino-acid sequence, 164 residues long: Transcription antitermination protein NusB (164 aa).

This sequence belongs to the NusB family.

In terms of biological role, involved in transcription antitermination. Required for transcription of ribosomal RNA (rRNA) genes. Binds specifically to the boxA antiterminator sequence of the ribosomal RNA (rrn) operons. The polypeptide is Transcription antitermination protein NusB (Chlorobaculum parvum (strain DSM 263 / NCIMB 8327) (Chlorobium vibrioforme subsp. thiosulfatophilum)).